Here is a 334-residue protein sequence, read N- to C-terminus: Fructose-1,6-bisphosphatase class 1 (334 aa).

Glu90, Asp113, Leu115, and Asp116 together coordinate Mg(2+). Substrate contacts are provided by residues 116 to 119, Asn209, Tyr242, and Lys272; that span reads DGSS. Glu278 provides a ligand contact to Mg(2+).

This sequence belongs to the FBPase class 1 family. Homotetramer. Mg(2+) is required as a cofactor.

It is found in the cytoplasm. It carries out the reaction beta-D-fructose 1,6-bisphosphate + H2O = beta-D-fructose 6-phosphate + phosphate. It functions in the pathway carbohydrate biosynthesis; gluconeogenesis. The polypeptide is Fructose-1,6-bisphosphatase class 1 (Haemophilus ducreyi (strain 35000HP / ATCC 700724)).